A 601-amino-acid chain; its full sequence is MKSDLAIVILAAGRGTRMRSSTPKVLHNIAGLPMVAHVLRGAQLLKPCKTIVVFRDVRVEQYIRNTFPDVLTVAQSDALYGTGFGVFSAIPWIRSESYGNTYPNTRHESHAEYELDACDLDTCNPASDRLNDQESLKGGRHIHTKSGDVTNNKPFPSRVLILYADVPLVPFQLLEELVRKPLKQAVGAIVTTHLDNPKGYGRVMRDNLGSIAKIIEDSNILPEQSINEVNTGVGIFDTEYLQDALNKLLKCHIAHSPNQDCVTNQDCVTNQDCVTNQDCVTNQDCVTNQDCVPAAHTEAHVLSPKVIVTEQIHKKAESEHQHAGQWMCRQDTVGAQNTKEEMRLTDIVEYFYNNGLRVNSITTSDSELLLGVNNRVQLAKTEKILNDQIIKRWQLYGVTIKSPETTWIDSTVQLSEDVLILPGCILSGRTRIEEGAVIGPFATISDSFIGKNTIVKRAEIIDARIEEGAVIGPFAFIRPGTVIGKDSKVGTFVEIKQSNIGPESKVPHLSYIGDANIGSHVNIGAGNIFANYDGKLKHETCIDDGVKTGAGNVFVAPVKVGRGAYTGAGSVIRDDIEEGALSLTELKQKTIPKWAENRGDG.

Residues 1-375 (MKSDLAIVIL…SELLLGVNNR (375 aa)) form a pyrophosphorylase region. UDP-N-acetyl-alpha-D-glucosamine-binding positions include 10-13 (LAAG), lysine 24, glutamine 75, and 81-82 (GT). Residue aspartate 165 participates in Mg(2+) binding. Glycine 201, glutamate 216, asparagine 230, and asparagine 373 together coordinate UDP-N-acetyl-alpha-D-glucosamine. Asparagine 373 is a binding site for Mg(2+). Residues 376-396 (VQLAKTEKILNDQIIKRWQLY) form a linker region. Positions 397–601 (GVTIKSPETT…PKWAENRGDG (205 aa)) are N-acetyltransferase. UDP-N-acetyl-alpha-D-glucosamine contacts are provided by arginine 478 and lysine 496. Histidine 508 acts as the Proton acceptor in catalysis. Tyrosine 511 and asparagine 522 together coordinate UDP-N-acetyl-alpha-D-glucosamine. Acetyl-CoA-binding positions include alanine 525, 531–532 (NY), and alanine 568.

The protein in the N-terminal section; belongs to the N-acetylglucosamine-1-phosphate uridyltransferase family. This sequence in the C-terminal section; belongs to the transferase hexapeptide repeat family. In terms of assembly, homotrimer. It depends on Mg(2+) as a cofactor.

Its subcellular location is the cytoplasm. The enzyme catalyses alpha-D-glucosamine 1-phosphate + acetyl-CoA = N-acetyl-alpha-D-glucosamine 1-phosphate + CoA + H(+). It carries out the reaction N-acetyl-alpha-D-glucosamine 1-phosphate + UTP + H(+) = UDP-N-acetyl-alpha-D-glucosamine + diphosphate. It functions in the pathway nucleotide-sugar biosynthesis; UDP-N-acetyl-alpha-D-glucosamine biosynthesis; N-acetyl-alpha-D-glucosamine 1-phosphate from alpha-D-glucosamine 6-phosphate (route II): step 2/2. The protein operates within nucleotide-sugar biosynthesis; UDP-N-acetyl-alpha-D-glucosamine biosynthesis; UDP-N-acetyl-alpha-D-glucosamine from N-acetyl-alpha-D-glucosamine 1-phosphate: step 1/1. It participates in bacterial outer membrane biogenesis; LPS lipid A biosynthesis. In terms of biological role, catalyzes the last two sequential reactions in the de novo biosynthetic pathway for UDP-N-acetylglucosamine (UDP-GlcNAc). The C-terminal domain catalyzes the transfer of acetyl group from acetyl coenzyme A to glucosamine-1-phosphate (GlcN-1-P) to produce N-acetylglucosamine-1-phosphate (GlcNAc-1-P), which is converted into UDP-GlcNAc by the transfer of uridine 5-monophosphate (from uridine 5-triphosphate), a reaction catalyzed by the N-terminal domain. The sequence is that of Bifunctional protein GlmU from Tropheryma whipplei (strain TW08/27) (Whipple's bacillus).